Here is a 214-residue protein sequence, read N- to C-terminus: Large ribosomal subunit protein uL3 (214 aa).

Positions 130-151 (FSSNRASHGNSRSHNTPGSIGQ) are enriched in polar residues. A disordered region spans residues 130–163 (FSSNRASHGNSRSHNTPGSIGQAQDPGRVFPGKR). Residue Q153 is modified to N5-methylglutamine.

This sequence belongs to the universal ribosomal protein uL3 family. Part of the 50S ribosomal subunit. Forms a cluster with proteins L14 and L19. Methylated by PrmB.

Its function is as follows. One of the primary rRNA binding proteins, it binds directly near the 3'-end of the 23S rRNA, where it nucleates assembly of the 50S subunit. This Chromobacterium violaceum (strain ATCC 12472 / DSM 30191 / JCM 1249 / CCUG 213 / NBRC 12614 / NCIMB 9131 / NCTC 9757 / MK) protein is Large ribosomal subunit protein uL3.